Reading from the N-terminus, the 240-residue chain is Regulatory protein SdiA (240 aa).

An HTH luxR-type domain is found at 173-238 (VMTPEMNFSK…QVACYAAATG (66 aa)). Positions 197 to 216 (SAEIAMILSISENTVNFHQK) form a DNA-binding region, H-T-H motif.

Its function is as follows. Activates cell division by specifically increasing transcription from one of the two promoters that lie immediately upstream of the ftsQAZ gene cluster. Activates ydiV expression in response to extracellular autoinducer AI-1 (Vibrio fischeri autoinducer oxoC6). In Escherichia coli (strain K12), this protein is Regulatory protein SdiA (sdiA).